A 257-amino-acid chain; its full sequence is UPF0259 membrane protein WIGBR3650 (257 aa).

6 helical membrane-spanning segments follow: residues 23–43, 89–109, 122–142, 148–168, 190–210, and 223–243; these read IIFF…IFLP, LSSL…INTI, IILS…ISFL, ALML…PILI, IKTV…ILVI, and VKIF…IYMY.

The protein belongs to the UPF0259 family.

The protein localises to the cell membrane. This Wigglesworthia glossinidia brevipalpis protein is UPF0259 membrane protein WIGBR3650.